Reading from the N-terminus, the 109-residue chain is Nucleoid-associated protein CC_0268 (109 aa).

Belongs to the YbaB/EbfC family. In terms of assembly, homodimer.

Its subcellular location is the cytoplasm. The protein localises to the nucleoid. Its function is as follows. Binds to DNA and alters its conformation. May be involved in regulation of gene expression, nucleoid organization and DNA protection. This chain is Nucleoid-associated protein CC_0268, found in Caulobacter vibrioides (strain ATCC 19089 / CIP 103742 / CB 15) (Caulobacter crescentus).